A 422-amino-acid chain; its full sequence is Adenylosuccinate synthetase (422 aa).

GTP-binding positions include 11–17 (GDEGKGK) and 39–41 (GHT). Aspartate 12 (proton acceptor) is an active-site residue. Mg(2+) contacts are provided by aspartate 12 and glycine 39. IMP contacts are provided by residues 12 to 15 (DEGK), 37 to 40 (NAGH), threonine 129, arginine 143, asparagine 219, threonine 234, and arginine 298. The active-site Proton donor is histidine 40. 294-300 (VTTGRRR) contacts substrate. GTP is bound by residues arginine 300, 326 to 328 (KLD), and 409 to 411 (GTG).

The protein belongs to the adenylosuccinate synthetase family. Homodimer. Mg(2+) is required as a cofactor.

The protein localises to the cytoplasm. It catalyses the reaction IMP + L-aspartate + GTP = N(6)-(1,2-dicarboxyethyl)-AMP + GDP + phosphate + 2 H(+). Its pathway is purine metabolism; AMP biosynthesis via de novo pathway; AMP from IMP: step 1/2. Functionally, plays an important role in the de novo pathway and in the salvage pathway of purine nucleotide biosynthesis. Catalyzes the first committed step in the biosynthesis of AMP from IMP. In Ajellomyces capsulatus (strain H143) (Darling's disease fungus), this protein is Adenylosuccinate synthetase.